Consider the following 253-residue polypeptide: Triosephosphate isomerase, cytosolic (253 aa).

Residues Asn-10 and Lys-12 each coordinate substrate. His-96 functions as the Electrophile in the catalytic mechanism. The active-site Proton acceptor is Glu-166.

This sequence belongs to the triosephosphate isomerase family. In terms of assembly, homodimer.

It localises to the cytoplasm. It catalyses the reaction D-glyceraldehyde 3-phosphate = dihydroxyacetone phosphate. It functions in the pathway carbohydrate biosynthesis; gluconeogenesis. Its pathway is carbohydrate degradation; glycolysis; D-glyceraldehyde 3-phosphate from glycerone phosphate: step 1/1. The chain is Triosephosphate isomerase, cytosolic from Secale cereale (Rye).